A 196-amino-acid polypeptide reads, in one-letter code: Phosphoheptose isomerase (196 aa).

The region spanning 36–195 is the SIS domain; sequence VIQAYKLGKK…EKELFGEKVD (160 aa). 51–53 contacts substrate; sequence NGG. 2 residues coordinate Zn(2+): H60 and E64. Residues E64, 93–94, 119–121, S124, and Q171 contribute to the substrate site; these read ND and STS. Zn(2+)-binding residues include Q171 and H179.

It belongs to the SIS family. GmhA subfamily. Requires Zn(2+) as cofactor.

The protein resides in the cytoplasm. It carries out the reaction 2 D-sedoheptulose 7-phosphate = D-glycero-alpha-D-manno-heptose 7-phosphate + D-glycero-beta-D-manno-heptose 7-phosphate. It functions in the pathway carbohydrate biosynthesis; D-glycero-D-manno-heptose 7-phosphate biosynthesis; D-glycero-alpha-D-manno-heptose 7-phosphate and D-glycero-beta-D-manno-heptose 7-phosphate from sedoheptulose 7-phosphate: step 1/1. Functionally, catalyzes the isomerization of sedoheptulose 7-phosphate in D-glycero-D-manno-heptose 7-phosphate. The chain is Phosphoheptose isomerase from Clostridium acetobutylicum (strain ATCC 824 / DSM 792 / JCM 1419 / IAM 19013 / LMG 5710 / NBRC 13948 / NRRL B-527 / VKM B-1787 / 2291 / W).